The following is a 329-amino-acid chain: Ketol-acid reductoisomerase (NADP(+)) (329 aa).

In terms of domain architecture, KARI N-terminal Rossmann spans valine 2–threonine 182. Residues tyrosine 25–glutamine 28, serine 51, and serine 53 each bind NADP(+). The active site involves histidine 108. Glycine 134 is an NADP(+) binding site. The region spanning threonine 183 to isoleucine 328 is the KARI C-terminal knotted domain. Aspartate 191, glutamate 195, glutamate 227, and glutamate 231 together coordinate Mg(2+). Serine 252 serves as a coordination point for substrate.

The protein belongs to the ketol-acid reductoisomerase family. The cofactor is Mg(2+).

It carries out the reaction (2R)-2,3-dihydroxy-3-methylbutanoate + NADP(+) = (2S)-2-acetolactate + NADPH + H(+). It catalyses the reaction (2R,3R)-2,3-dihydroxy-3-methylpentanoate + NADP(+) = (S)-2-ethyl-2-hydroxy-3-oxobutanoate + NADPH + H(+). It participates in amino-acid biosynthesis; L-isoleucine biosynthesis; L-isoleucine from 2-oxobutanoate: step 2/4. The protein operates within amino-acid biosynthesis; L-valine biosynthesis; L-valine from pyruvate: step 2/4. Its function is as follows. Involved in the biosynthesis of branched-chain amino acids (BCAA). Catalyzes an alkyl-migration followed by a ketol-acid reduction of (S)-2-acetolactate (S2AL) to yield (R)-2,3-dihydroxy-isovalerate. In the isomerase reaction, S2AL is rearranged via a Mg-dependent methyl migration to produce 3-hydroxy-3-methyl-2-ketobutyrate (HMKB). In the reductase reaction, this 2-ketoacid undergoes a metal-dependent reduction by NADPH to yield (R)-2,3-dihydroxy-isovalerate. This Frankia casuarinae (strain DSM 45818 / CECT 9043 / HFP020203 / CcI3) protein is Ketol-acid reductoisomerase (NADP(+)).